A 578-amino-acid chain; its full sequence is Zinc finger protein 248 (578 aa).

Positions 8–78 (VSFKDVCVDF…LEKGFPSQDP (71 aa)) constitute a KRAB domain. A C2H2-type 1; degenerate zinc finger spans residues 239–263 (TVCKYNECGRTFIESLKLNISQRPH). Lys340 participates in a covalent cross-link: Glycyl lysine isopeptide (Lys-Gly) (interchain with G-Cter in SUMO2). C2H2-type zinc fingers lie at residues 379–401 (FECGECGKTFWEKSNLTQHQRTH), 407–429 (YECTECGKAFCQKPHLTNHQRTH), 435–457 (YECKQCGKTFCVKSNLTEHQRTH), 463–485 (YECNACGKSFCHRSALTVHQRTH), 491–513 (FICNECGKSFCVKSNLIVHQRTH), 519–542 (YKCNECGKTFCEKSALTKHQRTHT), and 547–569 (YECNACGKTFSQRSVLTKHQRIH).

Belongs to the krueppel C2H2-type zinc-finger protein family.

It localises to the nucleus. In terms of biological role, may be involved in transcriptional regulation. This chain is Zinc finger protein 248 (ZNF248), found in Pongo abelii (Sumatran orangutan).